Reading from the N-terminus, the 26-residue chain is Conotoxin reg6(gamma) (26 aa).

The span at 1–12 (RVLEPGXEDPDV) shows a compositional bias: acidic residues. Residues 1 to 26 (RVLEPGXEDPDVGEPAGEYEHHLLEX) form a disordered region. A 4-carboxyglutamate modification is found at glutamate 4. Proline 5 is modified (4-hydroxyproline). Glutamate 8 bears the 4-carboxyglutamate mark. A 4-hydroxyproline modification is found at proline 10. 4-carboxyglutamate is present on glutamate 14. Proline 15 is subject to 4-hydroxyproline. Residues glutamate 18, glutamate 20, and glutamate 25 each carry the 4-carboxyglutamate modification.

As to expression, expressed by the venom duct.

It is found in the secreted. The sequence is that of Conotoxin reg6(gamma) from Conus regius (Crown cone).